The chain runs to 206 residues: Peptidyl-tRNA hydrolase (206 aa).

Tyrosine 14 contributes to the tRNA binding site. Histidine 19 functions as the Proton acceptor in the catalytic mechanism. Positions 64 and 66 each coordinate tRNA. Positions 182–206 (FNQKNKKKKEKEQPEAATDQLLENK) are disordered.

Belongs to the PTH family. Monomer.

Its subcellular location is the cytoplasm. The catalysed reaction is an N-acyl-L-alpha-aminoacyl-tRNA + H2O = an N-acyl-L-amino acid + a tRNA + H(+). Functionally, hydrolyzes ribosome-free peptidyl-tRNAs (with 1 or more amino acids incorporated), which drop off the ribosome during protein synthesis, or as a result of ribosome stalling. In terms of biological role, catalyzes the release of premature peptidyl moieties from peptidyl-tRNA molecules trapped in stalled 50S ribosomal subunits, and thus maintains levels of free tRNAs and 50S ribosomes. This chain is Peptidyl-tRNA hydrolase, found in Desulforamulus reducens (strain ATCC BAA-1160 / DSM 100696 / MI-1) (Desulfotomaculum reducens).